A 417-amino-acid chain; its full sequence is Gamma-glutamyl phosphate reductase (417 aa).

Belongs to the gamma-glutamyl phosphate reductase family.

Its subcellular location is the cytoplasm. It catalyses the reaction L-glutamate 5-semialdehyde + phosphate + NADP(+) = L-glutamyl 5-phosphate + NADPH + H(+). Its pathway is amino-acid biosynthesis; L-proline biosynthesis; L-glutamate 5-semialdehyde from L-glutamate: step 2/2. Its function is as follows. Catalyzes the NADPH-dependent reduction of L-glutamate 5-phosphate into L-glutamate 5-semialdehyde and phosphate. The product spontaneously undergoes cyclization to form 1-pyrroline-5-carboxylate. This Cronobacter sakazakii (strain ATCC BAA-894) (Enterobacter sakazakii) protein is Gamma-glutamyl phosphate reductase.